The chain runs to 375 residues: 23S rRNA (uracil(747)-C(5))-methyltransferase RlmC (375 aa).

Residues Cys3, Cys11, Cys14, and Cys87 each coordinate [4Fe-4S] cluster. S-adenosyl-L-methionine contacts are provided by Gln212, Phe241, Glu262, and Asn307. Residue Cys334 is the Nucleophile of the active site.

The protein belongs to the class I-like SAM-binding methyltransferase superfamily. RNA M5U methyltransferase family. RlmC subfamily.

The enzyme catalyses uridine(747) in 23S rRNA + S-adenosyl-L-methionine = 5-methyluridine(747) in 23S rRNA + S-adenosyl-L-homocysteine + H(+). Catalyzes the formation of 5-methyl-uridine at position 747 (m5U747) in 23S rRNA. This Salmonella arizonae (strain ATCC BAA-731 / CDC346-86 / RSK2980) protein is 23S rRNA (uracil(747)-C(5))-methyltransferase RlmC.